The chain runs to 440 residues: KH domain-containing protein 3 (440 aa).

The involved in RNA binding stretch occupies residues 1-39 (MASLKRFQTLVPLDHKQGTLFEIIGEPKLPKWFHVECLE). The KH; atypical domain occupies 40–118 (DPKRLYVEPR…CRMKLMEIEA (79 aa)). The disordered stretch occupies residues 132 to 201 (KAATQPAPVK…EVREAATEQA (70 aa)). Residue Ser-151 is modified to Phosphoserine; by ATR. Residues Thr-274 and Thr-286 each carry the phosphothreonine modification. The segment at 341-440 (VREAATQLSP…RDAWESFIIL (100 aa)) is required for interaction with NUMA1 and regulation of apoptosis in response to DNA damage. Position 349 is a phosphoserine (Ser-349).

The protein belongs to the KHDC1 family. As to quaternary structure, component of the subcortical maternal complex (SCMC), at least composed of NLRP5, KHDC3, OOEP, and TLE6. Within the complex, interacts with NLRP5, OOEP and TLE6. The SCMC may facilitate translocation of its components between the nuclear and cytoplasmic compartments. Forms a scaffold complex with OOEP/FLOPED, and interacts with BLM and TRIM25 at DNA replication forks. Interacts with PARP1; the interaction is increased following the formation of DNA double-strand breaks. Interacts (via C-terminus) with NUMA1. Phosphorylation at Ser-151 is required to promote stalled fork restart. In terms of tissue distribution, detected in ovary, but not in testis or somatic tissues. In the ovary, expressed in growing oocytes.

It localises to the cytoplasm. The protein localises to the cell cortex. It is found in the nucleus. Its subcellular location is the mitochondrion. The protein resides in the cytoskeleton. It localises to the microtubule organizing center. The protein localises to the centrosome. It is found in the chromosome. Functionally, component of the subcortical maternal complex (SCMC), a multiprotein complex that plays a key role in early embryonic development. The SCMC complex is a structural constituent of cytoplasmic lattices, which consist in fibrous structures found in the cytoplasm of oocytes and preimplantation embryos. They are required to store maternal proteins critical for embryonic development, such as proteins that control epigenetic reprogramming of the preimplantation embryo, and prevent their degradation or activation. KHDC3 ensures proper spindle assembly by regulating the localization of AURKA via RHOA signaling and of PLK1 via a RHOA-independent process. Required for the localization of MAD2L1 to kinetochores to enable spindle assembly checkpoint function. As part of the OOEP-KHDC3 scaffold, recruits BLM and TRIM25 to DNA replication forks, thereby promoting the ubiquitination of BLM by TRIM25, enhancing BLM retainment at replication forks and therefore promoting stalled replication fork restart. Regulates homologous recombination-mediated DNA repair via recruitment of RAD51 to sites of DNA double-strand breaks, and sustainment of PARP1 activity, which in turn modulates downstream ATM or ATR activation. Activation of ATM or ATR in response to DNA double-strand breaks may be cell-type specific. Its role in DNA double-strand break repair is independent of its role in restarting stalled replication forks. Promotes neural stem cell neurogenesis and neuronal differentiation in the hippocampus. May regulate normal development of learning, memory and anxiety. Capable of binding RNA. In Mus musculus (Mouse), this protein is KH domain-containing protein 3.